Reading from the N-terminus, the 445-residue chain is Trigger factor (445 aa).

Residues 172–257 (GDQVVIDFVG…VKSVNWAHMP (86 aa)) form the PPIase FKBP-type domain.

Belongs to the FKBP-type PPIase family. Tig subfamily.

It localises to the cytoplasm. It catalyses the reaction [protein]-peptidylproline (omega=180) = [protein]-peptidylproline (omega=0). Its function is as follows. Involved in protein export. Acts as a chaperone by maintaining the newly synthesized protein in an open conformation. Functions as a peptidyl-prolyl cis-trans isomerase. The protein is Trigger factor of Polynucleobacter asymbioticus (strain DSM 18221 / CIP 109841 / QLW-P1DMWA-1) (Polynucleobacter necessarius subsp. asymbioticus).